We begin with the raw amino-acid sequence, 120 residues long: Large ribosomal subunit protein uL24 (120 aa).

The tract at residues 1-33 (MTRQPHKQRNRQERAALHEKQKQVRAPLSPELR) is disordered. The span at 10–22 (NRQERAALHEKQK) shows a compositional bias: basic and acidic residues.

The protein belongs to the universal ribosomal protein uL24 family. In terms of assembly, part of the 50S ribosomal subunit.

In terms of biological role, one of two assembly initiator proteins, it binds directly to the 5'-end of the 23S rRNA, where it nucleates assembly of the 50S subunit. Its function is as follows. Located at the polypeptide exit tunnel on the outside of the subunit. The chain is Large ribosomal subunit protein uL24 from Natronomonas pharaonis (strain ATCC 35678 / DSM 2160 / CIP 103997 / JCM 8858 / NBRC 14720 / NCIMB 2260 / Gabara) (Halobacterium pharaonis).